We begin with the raw amino-acid sequence, 185 residues long: Elongation factor P (185 aa).

Belongs to the elongation factor P family.

It is found in the cytoplasm. The protein operates within protein biosynthesis; polypeptide chain elongation. Functionally, involved in peptide bond synthesis. Stimulates efficient translation and peptide-bond synthesis on native or reconstituted 70S ribosomes in vitro. Probably functions indirectly by altering the affinity of the ribosome for aminoacyl-tRNA, thus increasing their reactivity as acceptors for peptidyl transferase. The polypeptide is Elongation factor P (Salinispora arenicola (strain CNS-205)).